The sequence spans 814 residues: Oxysterol-binding protein-related protein 1C (814 aa).

One can recognise a PH domain in the interval 103-235 (GNGIAGILYK…WVEALQAVKD (133 aa)). Residues 300–367 (LLIDTLRQLE…AEEEFDEEEN (68 aa)) adopt a coiled-coil conformation. Disordered regions lie at residues 319–366 (VVDE…DEEE) and 379–411 (SSFK…PSIK). Acidic residues predominate over residues 347–366 (ESDDDNERGDAAEEEFDEEE). The span at 379–394 (SSFKSSGSGFRTSSFS) shows a compositional bias: low complexity. Positions 395 to 407 (SDEDGFESEDDID) are enriched in acidic residues.

This sequence belongs to the OSBP family. In terms of tissue distribution, expressed in roots, leaves, stems, flowers and pollen.

Functionally, may be involved in the transport of sterols. This Arabidopsis thaliana (Mouse-ear cress) protein is Oxysterol-binding protein-related protein 1C (ORP1C).